The following is a 268-amino-acid chain: 4-hydroxy-tetrahydrodipicolinate reductase (268 aa).

8 to 13 (GAAGRM) provides a ligand contact to NAD(+). Arginine 36 is an NADP(+) binding site. NAD(+) is bound by residues 99–101 (GTT) and 123–126 (AANF). Histidine 156 serves as the catalytic Proton donor/acceptor. Histidine 157 is a binding site for (S)-2,3,4,5-tetrahydrodipicolinate. The active-site Proton donor is the lysine 160. Residue 166 to 167 (GT) participates in (S)-2,3,4,5-tetrahydrodipicolinate binding.

It belongs to the DapB family.

It is found in the cytoplasm. The catalysed reaction is (S)-2,3,4,5-tetrahydrodipicolinate + NAD(+) + H2O = (2S,4S)-4-hydroxy-2,3,4,5-tetrahydrodipicolinate + NADH + H(+). It carries out the reaction (S)-2,3,4,5-tetrahydrodipicolinate + NADP(+) + H2O = (2S,4S)-4-hydroxy-2,3,4,5-tetrahydrodipicolinate + NADPH + H(+). It functions in the pathway amino-acid biosynthesis; L-lysine biosynthesis via DAP pathway; (S)-tetrahydrodipicolinate from L-aspartate: step 4/4. Its function is as follows. Catalyzes the conversion of 4-hydroxy-tetrahydrodipicolinate (HTPA) to tetrahydrodipicolinate. The protein is 4-hydroxy-tetrahydrodipicolinate reductase of Pseudomonas fluorescens (strain ATCC BAA-477 / NRRL B-23932 / Pf-5).